Reading from the N-terminus, the 470-residue chain is Ribulose bisphosphate carboxylase large chain (470 aa).

N115 and T165 together coordinate substrate. K167 serves as the catalytic Proton acceptor. K169 serves as a coordination point for substrate. Positions 193, 195, and 196 each coordinate Mg(2+). K193 is subject to N6-carboxylysine. The active-site Proton acceptor is the H286. Residues R287, H319, and S371 each coordinate substrate.

This sequence belongs to the RuBisCO large chain family. Type I subfamily. As to quaternary structure, heterohexadecamer of 8 large chains and 8 small chains. Forms a CsoS2-CsoS1-RuBisCO complex. The cofactor is Mg(2+).

The protein resides in the carboxysome. The catalysed reaction is 2 (2R)-3-phosphoglycerate + 2 H(+) = D-ribulose 1,5-bisphosphate + CO2 + H2O. It carries out the reaction D-ribulose 1,5-bisphosphate + O2 = 2-phosphoglycolate + (2R)-3-phosphoglycerate + 2 H(+). Its function is as follows. RuBisCO catalyzes two reactions: the carboxylation of D-ribulose 1,5-bisphosphate, the primary event in carbon dioxide fixation, as well as the oxidative fragmentation of the pentose substrate in the photorespiration process. Both reactions occur simultaneously and in competition at the same active site. This Prochlorococcus marinus (strain MIT 9313) protein is Ribulose bisphosphate carboxylase large chain.